A 573-amino-acid chain; its full sequence is Plasmepsin X (573 aa).

Residues 1–26 form the signal peptide; it reads MKRISPLNTLFYLSLFFSYTFKGLKC. Residues 27 to 221 constitute a propeptide that is removed on maturation; sequence TRIYKIGTKA…SSIEKNFIAL (195 aa). Intrachain disulfides connect Cys39/Cys51 and Cys42/Cys48. Residues 167-211 form a disordered region; that stretch reads KGNKNFTNNENNSDNENNSDNENNSDNENNLDNENNLDNENNSDN. Over residues 183–203 the composition is skewed to acidic residues; it reads NNSDNENNSDNENNLDNENNL. Residues 248 to 567 enclose the Peptidase A1 domain; sequence FVGELLVGTP…ESRPSMVGVA (320 aa). The active site involves Asp266. A disulfide bridge links Cys279 with Cys284. An N-linked (GlcNAc...) asparagine glycan is attached at Asn334. Cys447 and Cys448 are joined by a disulfide. Residue Asp457 is part of the active site. Cysteines 482 and 521 form a disulfide.

The protein belongs to the peptidase A1 family. In terms of processing, autocleaved into a p16 prodomain form and two mature forms p44 and p51.

It localises to the cytoplasmic vesicle. The protein localises to the secretory vesicle. With respect to regulation, inhibited by aminohydantoin compounds such as CWHM-117. During the asexual blood stage, processes key proteins essential for merozoite egress and invasion of host erythrocytes. Cleaves and activates proteases SUB1 and SUB2. May process members of the EBL and Rh protein families. Also cleaves apical membrane protein AMA1. During the mosquito vector stage and probably in ookinetes, cleaves CelTOS. In Plasmodium falciparum (isolate NF54), this protein is Plasmepsin X.